The primary structure comprises 390 residues: Magnesium-protoporphyrin IX monomethyl ester [oxidative] cyclase (390 aa).

It belongs to the AcsF family. Fe cation serves as cofactor.

The enzyme catalyses Mg-protoporphyrin IX 13-monomethyl ester + 3 NADPH + 3 O2 + 2 H(+) = 3,8-divinyl protochlorophyllide a + 3 NADP(+) + 5 H2O. It participates in porphyrin-containing compound metabolism; chlorophyll biosynthesis (light-independent). Its function is as follows. Catalyzes the formation of the isocyclic ring in chlorophyll biosynthesis. Mediates the cyclase reaction, which results in the formation of divinylprotochlorophyllide (Pchlide) characteristic of all chlorophylls from magnesium-protoporphyrin IX 13-monomethyl ester (MgPMME). This is Magnesium-protoporphyrin IX monomethyl ester [oxidative] cyclase from Prochlorococcus marinus subsp. pastoris (strain CCMP1986 / NIES-2087 / MED4).